Consider the following 185-residue polypeptide: Serine/arginine-rich splicing factor RSZ21A (185 aa).

One can recognise an RRM domain in the interval 2–73 (ARVYVGNLDP…WRVELSRNAS (72 aa)). The CCHC-type zinc finger occupies 87-104 (SKCYECGETGHFARECRL). Residues 109-185 (GGLGSGRRRS…YDNGYRRSRS (77 aa)) form a disordered region. Residues 114-131 (GRRRSRSRSRSRSPRYRR) are compositionally biased toward basic residues. 2 stretches are compositionally biased toward low complexity: residues 132–145 (SPSY…PAGR) and 152–163 (VSPARARSYSRS).

Belongs to the splicing factor SR family. Post-translationally, extensively phosphorylated on serine residues in the RS domain. As to expression, expressed in roots, leaves and immature seeds.

The protein resides in the nucleus. Its function is as follows. Involved in pre-mRNA splicing. The chain is Serine/arginine-rich splicing factor RSZ21A (RSZ21A) from Oryza sativa subsp. japonica (Rice).